The sequence spans 169 residues: UPF0303 protein BOV_1367 (169 aa).

It belongs to the UPF0303 family.

This is UPF0303 protein BOV_1367 from Brucella ovis (strain ATCC 25840 / 63/290 / NCTC 10512).